Reading from the N-terminus, the 542-residue chain is Carbamoyl phosphate synthase large chain, C-terminal section (542 aa).

Residues 1 to 389 (MSDKVLVIGA…WKAQLAAGHE (389 aa)) are carbamoyl phosphate synthetic domain. The ATP-grasp domain occupies 122–316 (SKLLKKLGIP…LAKIGTKAIL (195 aa)). 10 residues coordinate ATP: Arg158, Arg197, Ile199, Glu204, Gly230, Val231, His232, Ser233, Gln273, and Glu287. Mg(2+) contacts are provided by Gln273, Glu287, and Asn289. Positions 273, 287, and 289 each coordinate Mn(2+). Residues 388–542 (HELPLEGTAV…KPEELTRYGG (155 aa)) enclose the MGS-like domain. An allosteric domain region spans residues 390-542 (LPLEGTAVIS…KPEELTRYGG (153 aa)).

Belongs to the CarB family. In terms of assembly, composed of two chains; the small (or glutamine) chain promotes the hydrolysis of glutamine to ammonia, which is used by the large (or ammonia) chain to synthesize carbamoyl phosphate. Tetramer of heterodimers (alpha,beta)4. Mg(2+) is required as a cofactor. It depends on Mn(2+) as a cofactor.

The enzyme catalyses hydrogencarbonate + L-glutamine + 2 ATP + H2O = carbamoyl phosphate + L-glutamate + 2 ADP + phosphate + 2 H(+). The catalysed reaction is hydrogencarbonate + NH4(+) + 2 ATP = carbamoyl phosphate + 2 ADP + phosphate + 2 H(+). It participates in amino-acid biosynthesis; L-arginine biosynthesis; carbamoyl phosphate from bicarbonate: step 1/1. Its pathway is pyrimidine metabolism; UMP biosynthesis via de novo pathway; (S)-dihydroorotate from bicarbonate: step 1/3. Functionally, large subunit of the glutamine-dependent carbamoyl phosphate synthetase (CPSase). CPSase catalyzes the formation of carbamoyl phosphate from the ammonia moiety of glutamine, carbonate, and phosphate donated by ATP, constituting the first step of 2 biosynthetic pathways, one leading to arginine and/or urea and the other to pyrimidine nucleotides. The large subunit (synthetase) binds the substrates ammonia (free or transferred from glutamine from the small subunit), hydrogencarbonate and ATP and carries out an ATP-coupled ligase reaction, activating hydrogencarbonate by forming carboxy phosphate which reacts with ammonia to form carbamoyl phosphate. The protein is Carbamoyl phosphate synthase large chain, C-terminal section (carB2) of Methanopyrus kandleri (strain AV19 / DSM 6324 / JCM 9639 / NBRC 100938).